Consider the following 862-residue polypeptide: DNA mismatch repair protein MutS (862 aa).

Glycine 608–serine 615 contributes to the ATP binding site.

It belongs to the DNA mismatch repair MutS family.

This protein is involved in the repair of mismatches in DNA. It is possible that it carries out the mismatch recognition step. This protein has a weak ATPase activity. The sequence is that of DNA mismatch repair protein MutS from Borreliella afzelii (strain PKo) (Borrelia afzelii).